Reading from the N-terminus, the 808-residue chain is MAWSQLEVTKAHVAYSCVGIFSSIFSLVSLFVKEQLYIGESMVASIFGLIVGPHCLNWFNPLSWGNTDSITLEISRILLCLQVFAVSVELPRKYMLKHWVSVTMLLVPVMTSGWLVIALFVWILVPGLNFPASLLMGACITATDPVLAQSVVSGTFAQKVPGHLRNLLSCESGCNDGLAIPFVFLSLDLLLYPGRGGQIVKDWICVTILWECIFGSILGCIIGYCGRKAIRFAEGRHIIDRESFLAFYLILALTCAGFGSMLGVDDLLVSFFAGTAFAWDGWFAAKTHESNVSNVIDVLLNYAYFVYLGSILPWKDFNNPDIGLDVWRLILLSLVVIFLRRIPAVLSLKPLIPDIKSWREAMFIGHFGPIGVGAVFAAITSKSQLESHLTNEETPLKDTPGRGSKHWQVMACIWPITCFSIMTSVIVHGSSVAVIMLGRYLSTVTLMALPTGRTTNTKNAWLERLPALDKSGRPFSLQRLDKEPSLSPGQIGGRTSGMVATPKLGMRQRWRQKLQDNKEIEPDIEMNNFCQGTFQIRKETHASTNDSHGTTTANLGTSNGRAQGLPWRSKMNIIDRAEAVNTIYGLDKLAEDTENKDVWRVNTSRIPGIRSPYDDVYTYQSDSSSIGSIERQRIKSLREQEQQAYIAYTEDDQVIIENRQGEILEYVKFHKEGLGDAESGLHNHDRPKRAISPPLEKLHQITNEARKNKYYAYKVGNDLVIEDESGEVFRRYRISPHGGKRKIKKIINPVSSVLSSVGITKPRGVSERINHYLLHSEDEMADDEAESENDMDYEDSDGPASRFKDHAD.

9 helical membrane-spanning segments follow: residues 12–32, 36–56, 70–90, 105–125, 128–148, 174–194, 203–223, 244–264, and 267–287; these read HVAYSCVGIFSSIFSLVSLFV, LYIGESMVASIFGLIVGPHCL, ITLEISRILLCLQVFAVSVEL, LLVPVMTSGWLVIALFVWILV, LNFPASLLMGACITATDPVLA, CNDGLAIPFVFLSLDLLLYPG, WICVTILWECIFGSILGCIIG, FLAFYLILALTCAGFGSMLGV, and LLVSFFAGTAFAWDGWFAAKT. An N-linked (GlcNAc...) asparagine glycan is attached at asparagine 291. 5 helical membrane-spanning segments follow: residues 294–314, 319–339, 361–381, 409–429, and 432–452; these read NVIDVLLNYAYFVYLGSILPW, NPDIGLDVWRLILLSLVVIFL, AMFIGHFGPIGVGAVFAAITS, VMACIWPITCFSIMTSVIVHG, and VAVIMLGRYLSTVTLMALPTG. 2 disordered regions span residues 478-499 and 541-562; these read QRLDKEPSLSPGQIGGRTSGMV and HASTNDSHGTTTANLGTSNGRA. Over residues 542-561 the composition is skewed to polar residues; the sequence is ASTNDSHGTTTANLGTSNGR. 2 N-linked (GlcNAc...) asparagine glycosylation sites follow: asparagine 545 and asparagine 602. The interval 774 to 808 is disordered; sequence LHSEDEMADDEAESENDMDYEDSDGPASRFKDHAD. Residues 779-797 show a composition bias toward acidic residues; sequence EMADDEAESENDMDYEDSD.

Belongs to the fungal Na(+)/H(+) exchanger family.

Its subcellular location is the membrane. In terms of biological role, sodium export from cell, takes up external protons in exchange for internal sodium ions. Seems to be poorly expressed. The chain is Na(+)/H(+) antiporter 2 (SOD22) from Zygosaccharomyces rouxii.